We begin with the raw amino-acid sequence, 311 residues long: Porphobilinogen deaminase (311 aa).

An S-(dipyrrolylmethanemethyl)cysteine modification is found at Cys-242.

Belongs to the HMBS family. In terms of assembly, monomer. It depends on dipyrromethane as a cofactor.

The enzyme catalyses 4 porphobilinogen + H2O = hydroxymethylbilane + 4 NH4(+). It participates in porphyrin-containing compound metabolism; protoporphyrin-IX biosynthesis; coproporphyrinogen-III from 5-aminolevulinate: step 2/4. Its function is as follows. Tetrapolymerization of the monopyrrole PBG into the hydroxymethylbilane pre-uroporphyrinogen in several discrete steps. This chain is Porphobilinogen deaminase (hemC), found in Neisseria meningitidis serogroup B (strain ATCC BAA-335 / MC58).